Here is a 252-residue protein sequence, read N- to C-terminus: RNA-binding protein 7 (252 aa).

One can recognise an RRM domain in the interval 9 to 86 (RTLFVGNLDP…RQLNIKFKTG (78 aa)). Polar residues-rich tracts occupy residues 88-107 (SHIN…SPAN) and 119-137 (QMGS…PFSS). Disordered regions lie at residues 88–137 (SHIN…PFSS) and 171–252 (QLRG…WKHF). Composition is skewed to basic and acidic residues over residues 211 to 230 (ERNR…DRSG) and 237 to 252 (PPDR…WKHF).

Component of the nuclear exosome targeting (NEXT) complex composed of MTREX, ZCCHC8, and RBM7 that directs a subset of non-coding short-lived RNAs for exosomal degradation.

The protein resides in the nucleus. It localises to the nucleoplasm. Functionally, RNA-binding subunit of the trimeric nuclear exosome targeting (NEXT) complex, a complex that functions as an RNA exosome cofactor that directs a subset of non-coding short-lived RNAs for exosomal degradation. NEXT is involved in surveillance and turnover of aberrant transcripts and non-coding RNAs. Binds preferentially polyuridine sequences and associates with newly synthesized RNAs, including pre-mRNAs and short-lived exosome substrates such as promoter upstream transcripts (PROMPTs), enhancer RNAs (eRNAs), and 3'-extended products from small nuclear RNAs (snRNAs). The polypeptide is RNA-binding protein 7 (Danio rerio (Zebrafish)).